The following is a 541-amino-acid chain: CRISPR-associated exonuclease Cas4/endonuclease Cas1 fusion (541 aa).

The CRISPR-associated exonuclease Cas4 stretch occupies residues 1-179 (MGIHSLLYCE…NCSLAPVCLP (179 aa)). Cys9 contacts [4Fe-4S] cluster. 2 residues coordinate Mn(2+): Asp65 and Glu78. Positions 168, 171, and 177 each coordinate [4Fe-4S] cluster. Residues 204–541 (TLHVFGHDSR…ANIFAQARLR (338 aa)) are CRISPR-associated endonuclease Cas1. Positions 365, 433, and 448 each coordinate Mn(2+).

It in the N-terminal section; belongs to the CRISPR-associated exonuclease Cas4 family. In the C-terminal section; belongs to the CRISPR-associated endonuclease Cas1 family. In terms of assembly, homodimer, forms a heterotetramer with a Cas2 homodimer. The cofactor is [4Fe-4S] cluster. It depends on Mg(2+) as a cofactor. Mn(2+) is required as a cofactor.

The catalysed reaction is exonucleolytic cleavage in the 5'- to 3'-direction to yield nucleoside 3'-phosphates.. Functionally, CRISPR (clustered regularly interspaced short palindromic repeat), is an adaptive immune system that provides protection against mobile genetic elements (viruses, transposable elements and conjugative plasmids). CRISPR clusters contain spacers, sequences complementary to antecedent mobile elements, and target invading nucleic acids. CRISPR clusters are transcribed and processed into CRISPR RNA (crRNA). The Cas4 region acts as a ssDNA exonuclease, while the Cas1 region acts as a dsDNA endonuclease. Involved in the integration of spacer DNA into the CRISPR cassette. The sequence is that of CRISPR-associated exonuclease Cas4/endonuclease Cas1 fusion (cas4-cas1) from Leptospira interrogans serogroup Icterohaemorrhagiae serovar Lai (strain 56601).